The chain runs to 364 residues: MSGNSIGQNFVVTTFGESHGKALGCIIDGCPPGLELNEADMQRDLDRRRPGTSRYTTARREPDEVRVLSGIFEGKTTGTSIGLMIENTDQRSKDYSNIKDLFRPGHADYTYQQKYGLRDYRGGGRSSARETAMRVAAGAVAKKYLKQVHGIEINGYLSQLGPIKADTVDFSQIEQNAFFFPDESKLDELDEYMRKLIKSGDSIGAKVSVVATGVPVGLGEPVFDRLDAEIAHALMGINAVKGVEIGDGFGVVNQKGSEHRDLMSPEGFASNHAGGILGGISSGQPIVAHIAMKPTSSISIPGESMTAQGDVAEVVTKGRHDPCVGIRAVPIAEAMLAIVLMDHLLRHRAQNMDVNSQTPEIGMR.

The NADP(+) site is built by R48 and R54. Residues 125 to 127, 238 to 239, G278, 293 to 297, and R319 each bind FMN; these read RSS, NA, and KPTSS.

It belongs to the chorismate synthase family. In terms of assembly, homotetramer. Requires FMNH2 as cofactor.

The enzyme catalyses 5-O-(1-carboxyvinyl)-3-phosphoshikimate = chorismate + phosphate. It participates in metabolic intermediate biosynthesis; chorismate biosynthesis; chorismate from D-erythrose 4-phosphate and phosphoenolpyruvate: step 7/7. Functionally, catalyzes the anti-1,4-elimination of the C-3 phosphate and the C-6 proR hydrogen from 5-enolpyruvylshikimate-3-phosphate (EPSP) to yield chorismate, which is the branch point compound that serves as the starting substrate for the three terminal pathways of aromatic amino acid biosynthesis. This reaction introduces a second double bond into the aromatic ring system. In Shewanella sediminis (strain HAW-EB3), this protein is Chorismate synthase.